Consider the following 288-residue polypeptide: Solute carrier family 25 member 47-B (288 aa).

Solcar repeat units follow at residues 1–83 (MHLA…ILQF), 99–191 (AHIF…ICEI), and 199–286 (PGWP…VVRL). Transmembrane regions (helical) follow at residues 3–23 (LADFLAGSVGGAFGVAVGYPL), 58–75 (GMSMPISTVSISSSLVFG), 101–121 (IFLAGFTGGVTQVLVMAPADI), 175–195 (GPSFATYFLTYNTICEILTTE), 199–219 (PGWPVVLLAGGVSGMCGWAVG), and 257–277 (VLFRGLTVNCIRAFPVNMSVF).

The protein belongs to the mitochondrial carrier (TC 2.A.29) family.

The protein resides in the mitochondrion inner membrane. This Danio rerio (Zebrafish) protein is Solute carrier family 25 member 47-B (slc25a47b).